The chain runs to 252 residues: Probable transcriptional regulatory protein A1E_02520 (252 aa).

This sequence belongs to the TACO1 family.

The protein resides in the cytoplasm. This Rickettsia canadensis (strain McKiel) protein is Probable transcriptional regulatory protein A1E_02520.